The chain runs to 379 residues: MTNIRKSHPLLKIINSSFIDLPAPSNISSWWNFGSLLGICLAVQILTGLFLAMHYTSDTMTAFSSVTHICRDVNYGWILRYLHANGASMFFICLYIHVGRGLYYGSYMYTETWNIGVILLFAVMATAFMGYVLPWGQMSFWGATVITNLLSAIPYIGTDLVEWIWGGFSVDKATLTRFFAFHFLLPFIISAMVMVHLLFLHETGSNNPTGIPSNMDMIPFHPYYTIKDILGLLLMIMVLLMLVLFSPDMLGDPDNYTPANPLNTPPHIKPEWYFLFAYAILRSIPNKLGGVMALVLSILILIIIPVLHTSKQRSMTFRPLSQCLFWLLVADLLXVTWIGGQPVEXPYVIXGQLASIXXXXIXIXXXXXXSXAXXXXXXW.

The next 4 membrane-spanning stretches (helical) occupy residues 33–53 (FGSL…FLAM), 77–98 (WILR…YIHV), 113–133 (WNIG…GYVL), and 178–198 (FFAF…VHLL). The heme b site is built by His83 and His97. 2 residues coordinate heme b: His182 and His196. His201 provides a ligand contact to a ubiquinone. 4 consecutive transmembrane segments (helical) span residues 226–246 (IKDI…VLFS), 288–308 (LGGV…PVLH), 320–340 (LSQC…WIGG), and 347–367 (YVIX…XXXX).

Belongs to the cytochrome b family. In terms of assembly, the cytochrome bc1 complex contains 11 subunits: 3 respiratory subunits (MT-CYB, CYC1 and UQCRFS1), 2 core proteins (UQCRC1 and UQCRC2) and 6 low-molecular weight proteins (UQCRH/QCR6, UQCRB/QCR7, UQCRQ/QCR8, UQCR10/QCR9, UQCR11/QCR10 and a cleavage product of UQCRFS1). This cytochrome bc1 complex then forms a dimer. It depends on heme b as a cofactor.

The protein localises to the mitochondrion inner membrane. Component of the ubiquinol-cytochrome c reductase complex (complex III or cytochrome b-c1 complex) that is part of the mitochondrial respiratory chain. The b-c1 complex mediates electron transfer from ubiquinol to cytochrome c. Contributes to the generation of a proton gradient across the mitochondrial membrane that is then used for ATP synthesis. The protein is Cytochrome b (MT-CYB) of Myotis goudotii (Malagasy mouse-eared bat).